We begin with the raw amino-acid sequence, 406 residues long: Cysteine desulfurase (406 aa).

Residue Lys226 is modified to N6-(pyridoxal phosphate)lysine. The active-site Cysteine persulfide intermediate is the Cys364.

It belongs to the class-V pyridoxal-phosphate-dependent aminotransferase family. Csd subfamily. As to quaternary structure, homodimer. Interacts with SufE and the SufBCD complex composed of SufB, SufC and SufD. The interaction with SufE is required to mediate the direct transfer of the sulfur atom from the S-sulfanylcysteine. Requires pyridoxal 5'-phosphate as cofactor.

The protein localises to the cytoplasm. The catalysed reaction is (sulfur carrier)-H + L-cysteine = (sulfur carrier)-SH + L-alanine. The enzyme catalyses L-selenocysteine + AH2 = hydrogenselenide + L-alanine + A + H(+). The protein operates within cofactor biosynthesis; iron-sulfur cluster biosynthesis. In terms of biological role, cysteine desulfurases mobilize the sulfur from L-cysteine to yield L-alanine, an essential step in sulfur metabolism for biosynthesis of a variety of sulfur-containing biomolecules. Component of the suf operon, which is activated and required under specific conditions such as oxidative stress and iron limitation. Acts as a potent selenocysteine lyase in vitro, that mobilizes selenium from L-selenocysteine. Selenocysteine lyase activity is however unsure in vivo. The polypeptide is Cysteine desulfurase (Yersinia pestis bv. Antiqua (strain Angola)).